A 271-amino-acid chain; its full sequence is Acyl-[acyl-carrier-protein]--UDP-N-acetylglucosamine O-acyltransferase (271 aa).

Belongs to the transferase hexapeptide repeat family. LpxA subfamily. In terms of assembly, homotrimer.

It is found in the cytoplasm. The catalysed reaction is a (3R)-hydroxyacyl-[ACP] + UDP-N-acetyl-alpha-D-glucosamine = a UDP-3-O-[(3R)-3-hydroxyacyl]-N-acetyl-alpha-D-glucosamine + holo-[ACP]. It participates in glycolipid biosynthesis; lipid IV(A) biosynthesis; lipid IV(A) from (3R)-3-hydroxytetradecanoyl-[acyl-carrier-protein] and UDP-N-acetyl-alpha-D-glucosamine: step 1/6. In terms of biological role, involved in the biosynthesis of lipid A, a phosphorylated glycolipid that anchors the lipopolysaccharide to the outer membrane of the cell. The protein is Acyl-[acyl-carrier-protein]--UDP-N-acetylglucosamine O-acyltransferase of Rhizobium rhizogenes (strain K84 / ATCC BAA-868) (Agrobacterium radiobacter).